The chain runs to 119 residues: Large ribosomal subunit protein eL31y (119 aa).

The protein belongs to the eukaryotic ribosomal protein eL31 family.

The protein is Large ribosomal subunit protein eL31y (RPL31B) of Arabidopsis thaliana (Mouse-ear cress).